The following is a 1296-amino-acid chain: Phosphoribosylformylglycinamidine synthase (1296 aa).

The segment at Trp304–Arg323 is disordered. ATP contacts are provided by residues Gly306 to Asp317 and Ala677. Residues Asp678, Glu717, Asn721, and Asp885 each coordinate Mg(2+). An ATP-binding site is contributed by Ser887. Positions Pro1000–Glu1013 are enriched in basic and acidic residues. The segment at Pro1000 to Asn1019 is disordered. Residues Val1043–Gly1296 form the Glutamine amidotransferase type-1 domain. Cys1136 functions as the Nucleophile in the catalytic mechanism. Residues His1261 and Glu1263 contribute to the active site.

This sequence in the N-terminal section; belongs to the FGAMS family. As to quaternary structure, monomer.

The protein resides in the cytoplasm. The catalysed reaction is N(2)-formyl-N(1)-(5-phospho-beta-D-ribosyl)glycinamide + L-glutamine + ATP + H2O = 2-formamido-N(1)-(5-O-phospho-beta-D-ribosyl)acetamidine + L-glutamate + ADP + phosphate + H(+). The protein operates within purine metabolism; IMP biosynthesis via de novo pathway; 5-amino-1-(5-phospho-D-ribosyl)imidazole from N(2)-formyl-N(1)-(5-phospho-D-ribosyl)glycinamide: step 1/2. Phosphoribosylformylglycinamidine synthase involved in the purines biosynthetic pathway. Catalyzes the ATP-dependent conversion of formylglycinamide ribonucleotide (FGAR) and glutamine to yield formylglycinamidine ribonucleotide (FGAM) and glutamate. This Yersinia pseudotuberculosis serotype I (strain IP32953) protein is Phosphoribosylformylglycinamidine synthase.